Consider the following 155-residue polypeptide: UPF0178 protein Amet_2995 (155 aa).

It belongs to the UPF0178 family.

In Alkaliphilus metalliredigens (strain QYMF), this protein is UPF0178 protein Amet_2995.